The chain runs to 209 residues: Ion-translocating oxidoreductase complex subunit G (209 aa).

The helical transmembrane segment at 9–29 (GLVLAIFACASTGLVAVTHYL) threads the bilayer. FMN phosphoryl threonine is present on T175.

The protein belongs to the RnfG family. The complex is composed of six subunits: RnfA, RnfB, RnfC, RnfD, RnfE and RnfG. FMN is required as a cofactor.

It localises to the cell inner membrane. Part of a membrane-bound complex that couples electron transfer with translocation of ions across the membrane. This is Ion-translocating oxidoreductase complex subunit G from Vibrio atlanticus (strain LGP32) (Vibrio splendidus (strain Mel32)).